The chain runs to 292 residues: Lipoyl synthase (292 aa).

C38, C43, C49, C64, C68, C71, and S277 together coordinate [4Fe-4S] cluster. Residues W50–R266 enclose the Radical SAM core domain.

It belongs to the radical SAM superfamily. Lipoyl synthase family. The cofactor is [4Fe-4S] cluster.

It is found in the cytoplasm. It catalyses the reaction [[Fe-S] cluster scaffold protein carrying a second [4Fe-4S](2+) cluster] + N(6)-octanoyl-L-lysyl-[protein] + 2 oxidized [2Fe-2S]-[ferredoxin] + 2 S-adenosyl-L-methionine + 4 H(+) = [[Fe-S] cluster scaffold protein] + N(6)-[(R)-dihydrolipoyl]-L-lysyl-[protein] + 4 Fe(3+) + 2 hydrogen sulfide + 2 5'-deoxyadenosine + 2 L-methionine + 2 reduced [2Fe-2S]-[ferredoxin]. It functions in the pathway protein modification; protein lipoylation via endogenous pathway; protein N(6)-(lipoyl)lysine from octanoyl-[acyl-carrier-protein]: step 2/2. Functionally, catalyzes the radical-mediated insertion of two sulfur atoms into the C-6 and C-8 positions of the octanoyl moiety bound to the lipoyl domains of lipoate-dependent enzymes, thereby converting the octanoylated domains into lipoylated derivatives. This Chlorobium limicola (strain DSM 245 / NBRC 103803 / 6330) protein is Lipoyl synthase.